The primary structure comprises 344 residues: DNA polymerase IV (344 aa).

The region spanning 2 to 183 (IMLIDFDYFF…IKINDIPGIG (182 aa)) is the UmuC domain. The Mg(2+) site is built by aspartate 6 and aspartate 105. Glutamate 106 is an active-site residue.

This sequence belongs to the DNA polymerase type-Y family. As to quaternary structure, monomer. Requires Mg(2+) as cofactor.

The protein resides in the cytoplasm. The catalysed reaction is DNA(n) + a 2'-deoxyribonucleoside 5'-triphosphate = DNA(n+1) + diphosphate. Its function is as follows. Poorly processive, error-prone DNA polymerase involved in untargeted mutagenesis. Copies undamaged DNA at stalled replication forks, which arise in vivo from mismatched or misaligned primer ends. These misaligned primers can be extended by PolIV. Exhibits no 3'-5' exonuclease (proofreading) activity. May be involved in translesional synthesis. The chain is DNA polymerase IV from Picrophilus torridus (strain ATCC 700027 / DSM 9790 / JCM 10055 / NBRC 100828 / KAW 2/3).